The following is a 287-amino-acid chain: ATP synthase gamma chain (287 aa).

This sequence belongs to the ATPase gamma chain family. As to quaternary structure, F-type ATPases have 2 components, CF(1) - the catalytic core - and CF(0) - the membrane proton channel. CF(1) has five subunits: alpha(3), beta(3), gamma(1), delta(1), epsilon(1). CF(0) has three main subunits: a, b and c.

It is found in the cell inner membrane. In terms of biological role, produces ATP from ADP in the presence of a proton gradient across the membrane. The gamma chain is believed to be important in regulating ATPase activity and the flow of protons through the CF(0) complex. This Xylella fastidiosa (strain 9a5c) protein is ATP synthase gamma chain.